Reading from the N-terminus, the 225-residue chain is Transmembrane protein C16orf54 homolog (225 aa).

A helical membrane pass occupies residues 32-52 (PCIPIMLGLASLTAFFIITTA). 2 disordered regions span residues 106–163 (DRAP…ERPH) and 178–200 (EAGLQVGSPRPWRPRQGSLEPDW). 2 positions are modified to phosphothreonine: Thr113 and Thr117. The segment covering 122–140 (ATAPPATSAPYSSLSSLVP) has biased composition (low complexity). At Ser195 the chain carries Phosphoserine.

The protein localises to the membrane. The chain is Transmembrane protein C16orf54 homolog from Mus musculus (Mouse).